The sequence spans 150 residues: Large ribosomal subunit protein bL9 (150 aa).

Belongs to the bacterial ribosomal protein bL9 family.

In terms of biological role, binds to the 23S rRNA. The polypeptide is Large ribosomal subunit protein bL9 (Polynucleobacter necessarius subsp. necessarius (strain STIR1)).